Consider the following 588-residue polypeptide: DNA ligase (588 aa).

Glutamate 248 is an ATP binding site. Lysine 250 functions as the N6-AMP-lysine intermediate in the catalytic mechanism. 6 residues coordinate ATP: arginine 255, arginine 270, glutamate 300, phenylalanine 341, arginine 418, and lysine 424.

It belongs to the ATP-dependent DNA ligase family. Mg(2+) is required as a cofactor.

It catalyses the reaction ATP + (deoxyribonucleotide)n-3'-hydroxyl + 5'-phospho-(deoxyribonucleotide)m = (deoxyribonucleotide)n+m + AMP + diphosphate.. In terms of biological role, DNA ligase that seals nicks in double-stranded DNA during DNA replication, DNA recombination and DNA repair. The protein is DNA ligase of Thermoplasma volcanium (strain ATCC 51530 / DSM 4299 / JCM 9571 / NBRC 15438 / GSS1).